The following is a 204-amino-acid chain: ADP-ribosylation factor-like protein 15 (204 aa).

Residues 39–46 (GLTGSGKT), 82–86 (ELGGA), and 142–145 (NHQD) contribute to the GTP site.

This sequence belongs to the small GTPase superfamily. Arf family.

The polypeptide is ADP-ribosylation factor-like protein 15 (ARL15) (Homo sapiens (Human)).